The sequence spans 494 residues: GTPase Der (494 aa).

EngA-type G domains lie at 3 to 166 (PVIA…MDAE) and 207 to 380 (IKLA…DCST). Residues 9–16 (GRPNVGKS), 56–60 (DTGGI), 118–121 (NKTD), 213–220 (GRPNVGKS), 260–264 (DTAGV), and 325–328 (NKWD) each bind GTP. The region spanning 381–465 (KRVGTSLLTR…PIRIQFKEGE (85 aa)) is the KH-like domain.

The protein belongs to the TRAFAC class TrmE-Era-EngA-EngB-Septin-like GTPase superfamily. EngA (Der) GTPase family. Associates with the 50S ribosomal subunit.

GTPase that plays an essential role in the late steps of ribosome biogenesis. The polypeptide is GTPase Der (Yersinia enterocolitica serotype O:8 / biotype 1B (strain NCTC 13174 / 8081)).